The chain runs to 494 residues: uncharacterized protein (494 aa).

One can recognise a 2Fe-2S ferredoxin-type domain in the interval 4–82 (FTITVKKTEG…NMIIEPLEGF (79 aa)). Residues C46, C51, C54, and C66 each contribute to the [2Fe-2S] cluster site. 2 4Fe-4S ferredoxin-type domains span residues 127 to 157 (DLKD…NYPG) and 178 to 208 (EKEA…IVHN). 8 residues coordinate [4Fe-4S] cluster: C137, C140, C143, C147, C189, C192, C195, and C199.

Belongs to the succinate dehydrogenase/fumarate reductase iron-sulfur protein family.

This is an uncharacterized protein from Methanococcus maripaludis (strain DSM 14266 / JCM 13030 / NBRC 101832 / S2 / LL).